We begin with the raw amino-acid sequence, 384 residues long: Protein Brevis radix-like 4 (384 aa).

Disordered regions lie at residues 1-35 and 50-78; these read MLTC…SQLK and PCTA…SDFE. Residues 150–205 form the BRX 1 domain; the sequence is KEWVAQVEPGVLITFVSLPGGGNDLKRIRFSRDMFNKLQAQRWWADNYDKVMELYN. Disordered stretches follow at residues 214-270 and 304-325; these read FPLP…DHNS and SIRS…SNAS. Residues 221-235 show a composition bias toward basic and acidic residues; it reads RSEDENAKVEYHPED. The span at 260–270 shows a compositional bias: polar residues; the sequence is YSSSDSLDHNS. Basic and acidic residues predominate over residues 309 to 318; sequence SSRDADRSEE. The BRX 2 domain maps to 329 to 384; sequence NEWVEQDEPGVYITIKVLPGGKRELRRVRFSRERFGEMHARLWWEENRARIHEQYL.

It belongs to the BRX family. In terms of tissue distribution, expressed in roots.

It localises to the nucleus. This chain is Protein Brevis radix-like 4 (BRXL4), found in Arabidopsis thaliana (Mouse-ear cress).